The chain runs to 632 residues: tRNA-guanine(15) transglycosylase (632 aa).

Residue D86 is the Nucleophile of the active site. Residues D121 and G186 each coordinate substrate. A PUA domain is found at 553 to 628 (AMRVTVSKES…IAVKVHEGRD (76 aa)).

It belongs to the archaeosine tRNA-ribosyltransferase family. The cofactor is Zn(2+).

It catalyses the reaction guanosine(15) in tRNA + 7-cyano-7-deazaguanine = 7-cyano-7-carbaguanosine(15) in tRNA + guanine. It participates in tRNA modification; archaeosine-tRNA biosynthesis. Functionally, exchanges the guanine residue with 7-cyano-7-deazaguanine (preQ0) at position 15 in the dihydrouridine loop (D-loop) of archaeal tRNAs. This Thermoplasma acidophilum (strain ATCC 25905 / DSM 1728 / JCM 9062 / NBRC 15155 / AMRC-C165) protein is tRNA-guanine(15) transglycosylase.